A 117-amino-acid chain; its full sequence is Protein SMALL AUXIN UP-REGULATED RNA 54 (117 aa).

It belongs to the ARG7 family. Expressed in trichomes. Hardly observed in leaves.

The protein resides in the cell membrane. Its function is as follows. Provide a mechanistic link between auxin and plasma membrane H(+)-ATPases (PM H(+)-ATPases, e.g. AHA1 and AHA2), and triggers PM H(+)-ATPases activity by promoting phosphorylation of their C-terminal autoinhibitory domain as a result of PP2C-D subfamily of type 2C phosphatases inhibition, thus leading to the acidification of the apoplast and the facilitation of solutes and water uptake to drive cell expansion. Triggers plant growth probably by promoting cell elongation. Regulates branch angles and bending. This chain is Protein SMALL AUXIN UP-REGULATED RNA 54, found in Arabidopsis thaliana (Mouse-ear cress).